A 689-amino-acid chain; its full sequence is DNA ligase (689 aa).

NAD(+)-binding positions include 40–44, 89–90, and Glu-121; these read DAEYD and SL. Lys-123 serves as the catalytic N6-AMP-lysine intermediate. NAD(+) contacts are provided by Arg-144, Glu-179, Lys-295, and Lys-319. Cys-413, Cys-416, Cys-431, and Cys-437 together coordinate Zn(2+). The BRCT domain occupies 610–689; it reads REQSSLTGKI…AEWLTLVRDI (80 aa).

This sequence belongs to the NAD-dependent DNA ligase family. LigA subfamily. Requires Mg(2+) as cofactor. The cofactor is Mn(2+).

The catalysed reaction is NAD(+) + (deoxyribonucleotide)n-3'-hydroxyl + 5'-phospho-(deoxyribonucleotide)m = (deoxyribonucleotide)n+m + AMP + beta-nicotinamide D-nucleotide.. DNA ligase that catalyzes the formation of phosphodiester linkages between 5'-phosphoryl and 3'-hydroxyl groups in double-stranded DNA using NAD as a coenzyme and as the energy source for the reaction. It is essential for DNA replication and repair of damaged DNA. This chain is DNA ligase, found in Rickettsia bellii (strain OSU 85-389).